The sequence spans 102 residues: MICOS complex subunit MIC12 (102 aa).

A helical transmembrane segment spans residues 4–26 (VLKLTSVTLAASSLAAAGYFYAF).

The protein belongs to the MICOS complex subunit Mic12 family. In terms of assembly, component of the mitochondrial contact site and cristae organizing system (MICOS) complex.

The protein resides in the mitochondrion inner membrane. Functionally, component of the MICOS complex, a large protein complex of the mitochondrial inner membrane that plays crucial roles in the maintenance of crista junctions, inner membrane architecture, and formation of contact sites to the outer membrane. The protein is MICOS complex subunit MIC12 (AIM5) of Lachancea thermotolerans (strain ATCC 56472 / CBS 6340 / NRRL Y-8284) (Yeast).